The primary structure comprises 452 residues: Interferon-induced protein 44-like (452 aa).

Residues 1–159 enclose the TLDc domain; that stretch reads MEVTTRLTWN…YLECEVFRVE (159 aa).

Belongs to the IFI44 family. As to quaternary structure, interacts with FKBP5; this interaction modulates IKBKB and IKBKE kinase activities.

The protein resides in the cytoplasm. Functionally, type I interferon-stimulated gene (ISG) that plays a critical role in antiviral and antibacterial activity. During bacterial infection, promotes macrophage differentiation and facilitates inflammatory cytokine secretion. Plays a role in the control of respiratory syncytial virus/RSV infection, reducing the ability of the virus to replicate. Exhibits a low antiviral activity against hepatitis C virus. Also acts as a feedback regulator of IFN responses by negatively regulating IKBKB and IKBKE kinase activities through interaction with FKBP5. The protein is Interferon-induced protein 44-like (IFI44L) of Homo sapiens (Human).